The following is a 58-amino-acid chain: Protein SHMOOSE (58 aa).

Positions 27–58 (FGATPNKSNNHAHYYNHPNPDFPNSPHPYHPR) are disordered. Positions 35 to 45 (NNHAHYYNHPN) are enriched in low complexity. Over residues 46 to 58 (PDFPNSPHPYHPR) the composition is skewed to pro residues.

As to quaternary structure, interacts with IMMT/mitofilin. Detected in cerebrospinal fluid (at protein level).

The protein localises to the mitochondrion. Its subcellular location is the nucleus. Its function is as follows. Increases neural cell metabolic activity and mitochondrial oxygen consumption rate. This chain is Protein SHMOOSE, found in Homo sapiens (Human).